The sequence spans 529 residues: V-set and immunoglobulin domain-containing protein 10 (529 aa).

The signal sequence occupies residues 1–18; the sequence is MMITSAVVLYLLLLSHQT. 2 consecutive Ig-like C2-type domains span residues 19-110 and 129-217; these read VSEE…QTLS and PATF…QELL. The Extracellular portion of the chain corresponds to 21–411; that stretch reads EEQVQQFVIG…LNVKTSAGNG (391 aa). 13 N-linked (GlcNAc...) asparagine glycosylation sites follow: Asn34, Asn35, Asn46, Asn135, Asn147, Asn159, Asn211, Asn269, Asn280, Asn284, Asn330, Asn357, and Asn376. Cysteines 40 and 96 form a disulfide. Residues Cys150 and Cys199 are joined by a disulfide bond. One can recognise an Ig-like C2-type 3 domain in the interval 317-403; that stretch reads PTGQPLATAL…GARELEVYLN (87 aa). Cys335 and Cys387 are disulfide-bonded. The chain crosses the membrane as a helical span at residues 412–432; that stretch reads GAIVGIFVSVLVMMIGIVVGV. Residues 433-529 lie on the Cytoplasmic side of the membrane; it reads TVYTKRDRIC…PQRAELQPAV (97 aa).

The protein localises to the membrane. This chain is V-set and immunoglobulin domain-containing protein 10 (vsig10), found in Danio rerio (Zebrafish).